The sequence spans 70 residues: Large ribosomal subunit protein bL31 (70 aa).

Zn(2+) contacts are provided by Cys16, Cys18, Cys37, and Cys40.

The protein belongs to the bacterial ribosomal protein bL31 family. Type A subfamily. As to quaternary structure, part of the 50S ribosomal subunit. Zn(2+) serves as cofactor.

Its function is as follows. Binds the 23S rRNA. This chain is Large ribosomal subunit protein bL31, found in Glaesserella parasuis serovar 5 (strain SH0165) (Haemophilus parasuis).